The sequence spans 224 residues: 7-cyano-7-deazaguanine synthase (224 aa).

Leu9–Leu19 serves as a coordination point for ATP. Zn(2+)-binding residues include Cys189, Cys199, Cys202, and Cys205.

This sequence belongs to the QueC family. Requires Zn(2+) as cofactor.

The catalysed reaction is 7-carboxy-7-deazaguanine + NH4(+) + ATP = 7-cyano-7-deazaguanine + ADP + phosphate + H2O + H(+). Its pathway is purine metabolism; 7-cyano-7-deazaguanine biosynthesis. Functionally, catalyzes the ATP-dependent conversion of 7-carboxy-7-deazaguanine (CDG) to 7-cyano-7-deazaguanine (preQ(0)). This chain is 7-cyano-7-deazaguanine synthase, found in Ralstonia nicotianae (strain ATCC BAA-1114 / GMI1000) (Ralstonia solanacearum).